The chain runs to 214 residues: Melanoregulin (214 aa).

Residues 162–172 (LSERYLFVVDR) carry the Cholesterol-binding sequence motif motif. Ser213 bears the Phosphoserine mark.

This sequence belongs to the melanoregulin family. In terms of assembly, identified in a complex with RILP and DCTN1; interacts directly with RILP, but does not interact directly with DCTN1. Interacts with PRPH2. Post-translationally, palmitoylated. Palmitoylation is required to maintain the protein at the melanosome membrane. Expressed in photoreceptor cells (at protein level).

The protein resides in the apical cell membrane. Its subcellular location is the melanosome membrane. It localises to the lysosome membrane. It is found in the cytoplasmic vesicle membrane. Functionally, probably functions as a cargo-recognition protein that couples cytoplasmic vesicles to the transport machinery. Plays a role in hair pigmentation, a process that involves shedding of melanosome-containing vesicles from melanocytes, followed by phagocytosis of the melanosome-containing vesicles by keratinocytes. Functions on melanosomes as receptor for RILP and the complex formed by RILP and DCTN1, and thereby contributes to retrograde melanosome transport from the cell periphery to the center. Overexpression causes accumulation of late endosomes and/or lysosomes at the microtubule organising center (MTOC) at the center of the cell. Probably binds cholesterol and requires the presence of cholesterol in membranes to function in microtubule-mediated retrograde organelle transport. Binds phosphatidylinositol 3-phosphate, phosphatidylinositol 4-phosphate, phosphatidylinositol 5-phosphate and phosphatidylinositol 3,5-bisphosphate, but not phosphatidylinositol 3,4-bisphosphate or phosphatidylinositol 4,5-bisphosphate. Required for normal phagosome clearing and normal activation of lysosomal enzymes in lysosomes from retinal pigment epithelium cells. Required for normal degradation of the lipofuscin component N-retinylidene-N-retinylethanolamine (A2E) in the eye. May function in membrane fusion and regulate the biogenesis of disk membranes of photoreceptor rod cells. This Homo sapiens (Human) protein is Melanoregulin (MREG).